We begin with the raw amino-acid sequence, 252 residues long: Phosphate import ATP-binding protein PstB 1 (252 aa).

Residues 6-247 (LQVSDLSVYY…PKHKETEDYI (242 aa)) form the ABC transporter domain. 38–45 (GPSGSGKS) contacts ATP.

This sequence belongs to the ABC transporter superfamily. Phosphate importer (TC 3.A.1.7) family. In terms of assembly, the complex is composed of two ATP-binding proteins (PstB), two transmembrane proteins (PstC and PstA) and a solute-binding protein (PstS).

The protein localises to the cell membrane. The enzyme catalyses phosphate(out) + ATP + H2O = ADP + 2 phosphate(in) + H(+). In terms of biological role, part of the ABC transporter complex PstSACB involved in phosphate import. Responsible for energy coupling to the transport system. The sequence is that of Phosphate import ATP-binding protein PstB 1 from Streptococcus agalactiae serotype Ia (strain ATCC 27591 / A909 / CDC SS700).